We begin with the raw amino-acid sequence, 383 residues long: MFIYYCKECSIMNKQQSKVRYSIRKVSIGILSISIGMFLALGMSNKAYADEIDKSKDFTRGYEQNVFAKSELNANKNTTKDKIKNEGAVKTSDTSLKLDNKSAISNGNEINQDIKISNTPKNSSQGNNLVINNNEPTKEIKIANLEAQNSNQKKTNKVTNNYFGYYSFREAPKTQIYTVKKGDTLSAIALKYKTTVSNIQNTNNIANPNLIFIGQKLKVPMTPLVEPKPKTVSSNNKSNSNSSTLNYLKTLENRGWDFDGSYGWQCFDLVNVYWNHLYGHGLKGYGAKDIPYANNFNSEAKIYHNTPTFKAEPGDLVVFSGRFGGGYGHTAIVLNGDYDGKLMKFQSLDQNWNNGGWRKAEVAHKVVHNYENDMIFIRPFKKA.

Positions 1 to 49 (MFIYYCKECSIMNKQQSKVRYSIRKVSIGILSISIGMFLALGMSNKAYA) are cleaved as a signal peptide. Positions 175-219 (QIYTVKKGDTLSAIALKYKTTVSNIQNTNNIANPNLIFIGQKLKV) constitute a LysM domain. One can recognise a Peptidase C51 domain in the interval 241-378 (NSSTLNYLKT…NYENDMIFIR (138 aa)).

It localises to the secreted. Probably involved in peptidoglycan hydrolysis. This is Probable cell wall hydrolase LytN (lytN) from Staphylococcus aureus (strain Mu50 / ATCC 700699).